The sequence spans 225 residues: Protein-L-isoaspartate O-methyltransferase (225 aa).

The active site involves serine 75.

This sequence belongs to the methyltransferase superfamily. L-isoaspartyl/D-aspartyl protein methyltransferase family.

The protein resides in the cytoplasm. The catalysed reaction is [protein]-L-isoaspartate + S-adenosyl-L-methionine = [protein]-L-isoaspartate alpha-methyl ester + S-adenosyl-L-homocysteine. In terms of biological role, catalyzes the methyl esterification of L-isoaspartyl residues in peptides and proteins that result from spontaneous decomposition of normal L-aspartyl and L-asparaginyl residues. It plays a role in the repair and/or degradation of damaged proteins. The chain is Protein-L-isoaspartate O-methyltransferase from Xanthomonas campestris pv. campestris (strain 8004).